Consider the following 409-residue polypeptide: Inactive serine protease 35 (409 aa).

Residues 1 to 17 (MLLWLIFFTPGWTLIDG) form the signal peptide. N-linked (GlcNAc...) asparagine glycosylation is found at asparagine 87 and asparagine 107. A Peptidase S1 domain is found at 120–404 (VYGTDSRFSI…ICLWIHGNDA (285 aa)). Cysteine 150 and cysteine 166 are oxidised to a cystine. The span at 188 to 203 (RNKSGGKKRRGSKRSR) shows a compositional bias: basic residues. The interval 188–246 (RNKSGGKKRRGSKRSRRETSGGDQREGPREHLQDRVKAGRRRKQSGGGQRVSEGRPSFR) is disordered. Residues 204–224 (RETSGGDQREGPREHLQDRVK) are compositionally biased toward basic and acidic residues.

The protein belongs to the peptidase S1 family.

The protein resides in the secreted. The polypeptide is Inactive serine protease 35 (PRSS35) (Macaca mulatta (Rhesus macaque)).